The sequence spans 1390 residues: Bromodomain adjacent to zinc finger domain protein 2 (1390 aa).

3 disordered regions span residues 30 to 67 (AKIQKATASSPSKSTNGTSASTSAVPSTSGTSSSQNEA), 178 to 215 (AKKKPAGVASTSSASTSSSTPSTSSASITSSNNNAANN), and 235 to 269 (QKQQQQQKDTQKKADQAKKAKELAKQQQKEQDVKN). The segment covering 35–45 (ATASSPSKSTN) has biased composition (polar residues). Composition is skewed to low complexity over residues 46-63 (GTSASTSAVPSTSGTSSS) and 186-215 (ASTSSASTSSSTPSTSSASITSSNNNAANN). Positions 243–269 (DTQKKADQAKKAKELAKQQQKEQDVKN) are enriched in basic and acidic residues. Residues 323-395 (KTNEAMLRLP…DNFLFNTKLV (73 aa)) enclose the MBD domain. Residues 524 to 588 (SQGFADALMV…LRLALEFPGM (65 aa)) enclose the DDT domain. Over residues 705–724 (KEEQNHESDSEPPTRPDTPK) the composition is skewed to basic and acidic residues. The interval 705 to 729 (KEEQNHESDSEPPTRPDTPKKATVA) is disordered. Residues 1100–1149 (EALCQICKSMDGDEMLVCDGCESGCHMECFRPRMTKVPEGDWFCQRCREE) form a PHD-type zinc finger. The segment at 1218 to 1241 (EERELEDDNHAENGENTKNGHMNG) is disordered. The region spanning 1273–1377 (LPKNMNKELC…KFFQKRWKQL (105 aa)) is the Bromo domain.

The protein belongs to the WAL family. In terms of assembly, interacts with set-6. In terms of tissue distribution, broadly expressed in the nervous system, including head, body and tail neurons.

It is found in the nucleus. Its subcellular location is the chromosome. Functionally, chromatin reader protein, involved in positively modulating the rate of age-related behavioral deterioration. Positively modulates the level of global trimethylated 'Lys-9' of histone H3 (H3K9me3), but not of H3K9me2 or H3K9me1. May repress the expression of mitochondrial function-related genes by occupying their promoter regions, working in concert with histone methyltransferase, set-6. Involved in modulation of the mitochondrial unfolded protein response (UPR). Negatively regulates expression of bas-1, a serotonin (5-HT) and dopamine synthesizing enzyme (DOPA decarboxylase), with aging. Negatively modulates levels of endogenous 5-HT and dopamine with aging. Involved in modulating longevity, probably as a result of enhanced stress resistance via mechanisms related to dietary restriction and mitochondrial function. This is Bromodomain adjacent to zinc finger domain protein 2 from Caenorhabditis elegans.